Here is a 1478-residue protein sequence, read N- to C-terminus: Bud site selection protein 3 homolog (1478 aa).

Disordered regions lie at residues 732–889 (KSKC…PSKG), 1085–1106 (QRDS…HSSN), and 1146–1168 (YSHS…VSAP). A compositionally biased stretch (polar residues) spans 749-761 (LVSTNDNSRTLSP). The span at 763–777 (TIISRTPRTISTITP) shows a compositional bias: low complexity. The span at 786–800 (GQASNSPARGSISTT) shows a compositional bias: polar residues. Basic and acidic residues predominate over residues 1146–1160 (YSHSHDEEIDSEKRA).

Belongs to the BUD3 family.

It is found in the cell tip. Its subcellular location is the cell septum. Required for proper septum positioning and septum construction during septation. Acts as a landmark to mark sites for future septation, and as part of a scaffold that recruits components of the contractile ring to the site of septation. Not required to determine the site of lateral branch formation. The chain is Bud site selection protein 3 homolog (BUD3) from Eremothecium gossypii (strain ATCC 10895 / CBS 109.51 / FGSC 9923 / NRRL Y-1056) (Yeast).